Consider the following 131-residue polypeptide: uncharacterized protein (131 aa).

The first 16 residues, 1 to 16 (MDVLFVAIFAVPLILG), serve as a signal peptide directing secretion.

It is found in the secreted. This is an uncharacterized protein from Homo sapiens (Human).